A 1577-amino-acid polypeptide reads, in one-letter code: Dynamin-binding protein (1577 aa).

At methionine 1 the chain carries N-acetylmethionine. 4 consecutive SH3 domains span residues 2-61 (EAGS…IVTI), 66-126 (EGER…ELCL), 145-204 (YSMG…LLGP), and 243-302 (EPGT…LCPD). 2 disordered regions span residues 211-244 (SVSS…EEEP) and 335-395 (EEQR…WEMP). Residues 230 to 244 (VGEEEIGPDEDEEEP) are compositionally biased toward acidic residues. The segment covering 335–344 (EEQRHETSDH) has biased composition (basic and acidic residues). Serine 496 is subject to Phosphoserine. Disordered regions lie at residues 591-624 (GSSK…TSPH) and 639-659 (VRPS…NAVS). Residues 639-649 (VRPSRPAPLPP) are compositionally biased toward pro residues. Serine 684 is modified (phosphoserine). Residues 693 to 757 (LVLVRIEEME…ELQQLREMTL (65 aa)) are a coiled coil. A DH domain is found at 784–967 (KRAKVIEELL…KEINVNINEY (184 aa)). The region spanning 1008-1217 (LKHLTGFAPQ…LKVAGREGNL (210 aa)) is the BAR domain. The stretch at 1136-1173 (ERAEKLKDKKTLEELQSARNNYEALNAQLLDELPKFHQ) forms a coiled coil. The SH3 5 domain maps to 1285–1348 (PPEKLFQAER…YSSFLKPYNP (64 aa)). A disordered region spans residues 1348-1487 (PRRSHSDASV…SVPGRNGQSQ (140 aa)). A compositionally biased stretch (polar residues) spans 1376-1405 (RQNSGSTLTFNPSSMAVSFTSGSCQKQPQD). Over residues 1419 to 1442 (SASLNPSNSESSPSRCPSDPDSTS) the composition is skewed to low complexity. One can recognise an SH3 6 domain in the interval 1513–1576 (EGNQVYFAVY…PSNYIRKTEY (64 aa)).

In terms of assembly, binds DNM1 via its N-terminal SH3 domains. The C-terminal SH3 domain binds a complex containing actin, tubulin, Hsp70 and actin-regulatory proteins, such as ENAH, EVL, WIRE, CR16, WAVE1 and NAP1L1. Interacts with FASLG. Interacts (via SH3 domain 6) with WASL. Interacts (via SH3 domain 6) interacts with ENAH. Interacts (via C-terminal domain) with TJP1; required for the apical cell-cell junction localization of DNMBP. (Microbial infection) Interacts (via SH3 domain 6) with L.monocytogenes InlC. Detected in heart, brain, lung, liver, skeletal muscle, kidney and pancreas.

The protein resides in the cytoplasm. Its subcellular location is the golgi apparatus. It is found in the golgi stack. It localises to the cytoskeleton. The protein localises to the synapse. The protein resides in the cell junction. Plays a critical role as a guanine nucleotide exchange factor (GEF) for CDC42 in several intracellular processes associated with the actin and microtubule cytoskeleton. Regulates the structure of apical junctions through F-actin organization in epithelial cells. Participates in the normal lumenogenesis of epithelial cell cysts by regulating spindle orientation. Plays a role in ciliogenesis. May play a role in membrane trafficking between the cell surface and the Golgi. In Homo sapiens (Human), this protein is Dynamin-binding protein.